The primary structure comprises 1463 residues: DNA polymerase III PolC-type (1463 aa).

An Exonuclease domain is found at Tyr425–Leu581.

The protein belongs to the DNA polymerase type-C family. PolC subfamily.

The protein resides in the cytoplasm. It catalyses the reaction DNA(n) + a 2'-deoxyribonucleoside 5'-triphosphate = DNA(n+1) + diphosphate. Its function is as follows. Required for replicative DNA synthesis. This DNA polymerase also exhibits 3' to 5' exonuclease activity. This is DNA polymerase III PolC-type from Streptococcus pneumoniae serotype 2 (strain D39 / NCTC 7466).